Here is an 80-residue protein sequence, read N- to C-terminus: Exodeoxyribonuclease 7 small subunit (80 aa).

The protein belongs to the XseB family. As to quaternary structure, heterooligomer composed of large and small subunits.

It localises to the cytoplasm. It carries out the reaction Exonucleolytic cleavage in either 5'- to 3'- or 3'- to 5'-direction to yield nucleoside 5'-phosphates.. Its function is as follows. Bidirectionally degrades single-stranded DNA into large acid-insoluble oligonucleotides, which are then degraded further into small acid-soluble oligonucleotides. This is Exodeoxyribonuclease 7 small subunit from Aliivibrio fischeri (strain ATCC 700601 / ES114) (Vibrio fischeri).